Here is a 183-residue protein sequence, read N- to C-terminus: Translation initiation factor IF-3 (183 aa).

It belongs to the IF-3 family. As to quaternary structure, monomer.

Its subcellular location is the cytoplasm. Functionally, IF-3 binds to the 30S ribosomal subunit and shifts the equilibrium between 70S ribosomes and their 50S and 30S subunits in favor of the free subunits, thus enhancing the availability of 30S subunits on which protein synthesis initiation begins. This is Translation initiation factor IF-3 from Pseudomonas fluorescens (strain SBW25).